The sequence spans 158 residues: 6,7-dimethyl-8-ribityllumazine synthase (158 aa).

Residues Phe23, 61 to 63 (SFE), and 85 to 87 (AVI) each bind 5-amino-6-(D-ribitylamino)uracil. (2S)-2-hydroxy-3-oxobutyl phosphate is bound at residue 90-91 (DT). His93 (proton donor) is an active-site residue. Phe118 is a 5-amino-6-(D-ribitylamino)uracil binding site. A (2S)-2-hydroxy-3-oxobutyl phosphate-binding site is contributed by Arg132.

This sequence belongs to the DMRL synthase family.

The enzyme catalyses (2S)-2-hydroxy-3-oxobutyl phosphate + 5-amino-6-(D-ribitylamino)uracil = 6,7-dimethyl-8-(1-D-ribityl)lumazine + phosphate + 2 H2O + H(+). It functions in the pathway cofactor biosynthesis; riboflavin biosynthesis; riboflavin from 2-hydroxy-3-oxobutyl phosphate and 5-amino-6-(D-ribitylamino)uracil: step 1/2. Its function is as follows. Catalyzes the formation of 6,7-dimethyl-8-ribityllumazine by condensation of 5-amino-6-(D-ribitylamino)uracil with 3,4-dihydroxy-2-butanone 4-phosphate. This is the penultimate step in the biosynthesis of riboflavin. The sequence is that of 6,7-dimethyl-8-ribityllumazine synthase from Prochlorococcus marinus (strain NATL2A).